Here is a 437-residue protein sequence, read N- to C-terminus: MSEFDELKYLTGFGNEHATSDPRVPDALPVGQNSPQKCSHGLYAEQLSGTAFTAPRSQNQRSWLYRIRPSVIHRPFEAMKENDQHWTNNFSSIPPNPNQYRWNPFPLPTKEGVTFVDNLYTVCGGGDVISRTGLAIHQFSCNASMEHTAMYNSDGDFLIVPQQGALEITTEFGRLLVNPQEIAVIPQGIRFSVAVRGPSRGYILEVYGTHFQLPDLGPIGANGLANPRDFEAPVAWFEDLDVEFTIINKYQGSWFQAKQGHSPFDVVGWHGNYVPYKYDLKKFMVINTVSFDHCDPSIFTVLTAPSVKHGTAIADFVIFPPRWGCADNTFRPPYYHRNCMSEYMGLITGCYEAKEGGFKPGGGSLHSMMTPHGPDFNCFEMASNADLKPQRVAEGTMSFMFESSLNMAITNWAVYQNVDKDYYKDWQPLKKHFTMPK.

The interval 15–34 is disordered; sequence NEHATSDPRVPDALPVGQNS. The Fe cation site is built by H336, E342, and H372.

It belongs to the homogentisate dioxygenase family. Requires Fe cation as cofactor. As to expression, expressed in the hypodermis and intestine.

The catalysed reaction is homogentisate + O2 = 4-maleylacetoacetate + H(+). The protein operates within amino-acid degradation; L-phenylalanine degradation; acetoacetate and fumarate from L-phenylalanine: step 4/6. In terms of biological role, plays a role in the tyrosine degradation pathway. This is Homogentisate 1,2-dioxygenase from Caenorhabditis elegans.